Reading from the N-terminus, the 381-residue chain is Heme A synthase (381 aa).

The disordered stretch occupies residues 1 to 28 (MSNRTIFEEVSSDSKQQSSPTPGGIDRK). 8 helical membrane passes run 36 to 56 (IRVW…VGGL), 125 to 145 (VIGL…SIPT), 151 to 171 (LLLP…MVAS), 187 to 207 (LATH…YMFL), 230 to 250 (STGL…VAGI), 287 to 307 (LVQF…VVVW), 320 to 340 (FAFN…IVTV), and 344 to 364 (APVE…VLIL). His-292 contacts heme. His-352 contributes to the heme binding site.

This sequence belongs to the COX15/CtaA family. Type 2 subfamily. In terms of assembly, interacts with CtaB. Requires heme b as cofactor.

It localises to the cell membrane. The enzyme catalyses Fe(II)-heme o + 2 A + H2O = Fe(II)-heme a + 2 AH2. It functions in the pathway porphyrin-containing compound metabolism; heme A biosynthesis; heme A from heme O: step 1/1. In terms of biological role, catalyzes the conversion of heme O to heme A by two successive hydroxylations of the methyl group at C8. The first hydroxylation forms heme I, the second hydroxylation results in an unstable dihydroxymethyl group, which spontaneously dehydrates, resulting in the formyl group of heme A. The protein is Heme A synthase of Ruegeria sp. (strain TM1040) (Silicibacter sp.).